Reading from the N-terminus, the 223-residue chain is Agamous-like MADS-box protein AGL11 (223 aa).

The MADS-box domain maps to 1–61 (MGRGKIEIKR…GRVYEYSNNN (61 aa)). Residues 87–177 (AQYYQQESAK…RTKIAEVERL (91 aa)) enclose the K-box domain.

Expressed in flowers and seeds. Expressed in endotesta cell layer of developing seeds.

It localises to the nucleus. In terms of biological role, probable transcription factor involved in seed development. Plays a role in seed morphogenesis by promoting the correct development of endotesta cell layer, which directs the further development of the seed coat, the endosperm, and consequently the embryo. The protein is Agamous-like MADS-box protein AGL11 of Vitis vinifera (Grape).